Reading from the N-terminus, the 830-residue chain is GPI ethanolamine phosphate transferase 2 (830 aa).

An N-terminal signal peptide occupies residues 1–32 (MNLKQFTCLSCAQLLAILLFIFAFFPRKIVLT). Over 33–321 (GISKQDPDQD…QYLETVQQID (289 aa)) the chain is Lumenal. N-linked (GlcNAc...) asparagine glycosylation is found at Asn-145, Asn-185, and Asn-298. Residues 322–342 (IVPTIAALFGMPIPMNSVGII) form a helical membrane-spanning segment. The Cytoplasmic segment spans residues 343 to 405 (IPDFLQLLPN…TKSATNYNYP (63 aa)). Residues 406-426 (LLTLAFVGFLIITIIAIYVLL) traverse the membrane as a helical segment. Residues 427 to 439 (RYSGPDFWQLRVS) are Lumenal-facing. The helical transmembrane segment at 440–460 (SLSVLLVSIILGVSTFASSFI) threads the bilayer. The Cytoplasmic segment spans residues 461–469 (EEEHQLWWW). Residues 470-490 (IVTAFSAVPLFVYRLNVLIIV) traverse the membrane as a helical segment. At 491–533 (RWFIMMACVRSIKFWNNSGQKFIYSNVMSNLLNQNPSWKWCLN) the chain is on the lumenal side. A glycan (N-linked (GlcNAc...) asparagine) is linked at Asn-506. The chain crosses the membrane as a helical span at residues 534–554 (MLTFLVLIMASAGFQVLHFIV). Residues 555-598 (TTILVGLCFTYKISWEIVNGNQAEIPLFMHDLLAKIDFAPTESN) lie on the Cytoplasmic side of the membrane. Residues 599 to 619 (LIVLARVFFQAWAIVVISRLV) traverse the membrane as a helical segment. Over 620 to 651 (LTKLKVLNKNYLIKDMKVYITILLMFQTSSQN) the chain is Lumenal. The chain crosses the membrane as a helical span at residues 652–672 (IGQFLVFQILESQIFYFFQNI). Residues 673 to 682 (PTASLTSTSK) are Cytoplasmic-facing. The chain crosses the membrane as a helical span at residues 683-703 (IYFSNLVSLILQNFTFFQFGG). Residues 704 to 724 (TNSISTIDLGNAYHGVSSDYN) are Lumenal-facing. Residues 725–745 (IYVVGILMSVANFAPAIYWSM) traverse the membrane as a helical segment. Residues 746 to 768 (LPWSINYASIPAQVKLQTFIRSK) lie on the Cytoplasmic side of the membrane. The helical transmembrane segment at 769-789 (LPAFTYHCIFGTCLMTACVVL) threads the bilayer. The Lumenal segment spans residues 790-805 (RFHLFIWSVFSPKLCY). Residues 806–826 (FLGWNFVMGLLNGWLPELALL) traverse the membrane as a helical segment. Over 827-830 (CALD) the chain is Cytoplasmic.

This sequence belongs to the PIGG/PIGN/PIGO family. PIGG subfamily. In terms of processing, N-glycosylated.

Its subcellular location is the endoplasmic reticulum membrane. Its pathway is glycolipid biosynthesis; glycosylphosphatidylinositol-anchor biosynthesis. Functionally, ethanolamine phosphate transferase involved in glycosylphosphatidylinositol-anchor biosynthesis. Transfers ethanolamine phosphate to the GPI second mannose. Although not essential, addition of ethanolamine phosphate to the second mannose plays an important role in cell separation via the GPI-based modification of daughter-specific proteins. In Saccharomyces cerevisiae (strain ATCC 204508 / S288c) (Baker's yeast), this protein is GPI ethanolamine phosphate transferase 2 (LAS21).